We begin with the raw amino-acid sequence, 1108 residues long: Multidrug resistance regulator 1 (1108 aa).

Residues 1–19 (MSIATTPIETPKSPKSTEP) show a composition bias toward polar residues. The segment at 1–27 (MSIATTPIETPKSPKSTEPQVRKRKKV) is disordered. The zn(2)-C6 fungal-type DNA-binding region spans 31–59 (CTNCRKRKIRCDRQHPCNNCIKSKKHNAC). A compositionally biased stretch (polar residues) spans 68-83 (PANFSTNGSSHGNTVP). Disordered regions lie at residues 68–138 (PANF…SENE), 968–990 (DQTYSTSSESSSTPNKDSPLDSR), and 1021–1064 (AQQQ…YYGN). 2 stretches are compositionally biased toward basic and acidic residues: residues 86–104 (RPYEESARIPIRFDAEAPR) and 114–123 (NERKNSKKSP). Positions 124 to 138 (DNTVANNQQTASENE) are enriched in polar residues. Residues 134–165 (ASENEVTITLSELNMLKQRLQNIEANINAQSN) adopt a coiled-coil conformation. Composition is skewed to low complexity over residues 970 to 980 (TYSTSSESSST) and 1023 to 1041 (QQRQQESQPFTSSQSQSQS).

The protein resides in the nucleus. Functionally, transcription factor that acts as the central regulator of the MDR1 efflux pump. Other target genes include those encoding oxidoreductases, whose up-regulation in fluconazole-resistant isolates may help to prevent cell damage resulting from the generation of toxic molecules in the presence of fluconazole and thereby contribute to drug resistance. The sequence is that of Multidrug resistance regulator 1 from Candida albicans (strain SC5314 / ATCC MYA-2876) (Yeast).